The following is a 532-amino-acid chain: Type 2 DNA topoisomerase 6 subunit B (532 aa).

ATP contacts are provided by residues N41, D75, 96-97 (SK), 105-112 (GMYGLGVK), and K427.

The protein belongs to the TOP6B family. As to quaternary structure, homodimer. Heterotetramer of two Top6A and two Top6B chains.

The enzyme catalyses ATP-dependent breakage, passage and rejoining of double-stranded DNA.. Relaxes both positive and negative superturns and exhibits a strong decatenase activity. This Sulfurisphaera tokodaii (strain DSM 16993 / JCM 10545 / NBRC 100140 / 7) (Sulfolobus tokodaii) protein is Type 2 DNA topoisomerase 6 subunit B.